We begin with the raw amino-acid sequence, 447 residues long: Tubulin beta-5 chain (447 aa).

Gln11, Glu69, Ser138, Gly142, Thr143, Gly144, Asn204, and Asn226 together coordinate GTP. Glu69 lines the Mg(2+) pocket.

It belongs to the tubulin family. As to quaternary structure, dimer of alpha and beta chains. A typical microtubule is a hollow water-filled tube with an outer diameter of 25 nm and an inner diameter of 15 nM. Alpha-beta heterodimers associate head-to-tail to form protofilaments running lengthwise along the microtubule wall with the beta-tubulin subunit facing the microtubule plus end conferring a structural polarity. Microtubules usually have 13 protofilaments but different protofilament numbers can be found in some organisms and specialized cells. Requires Mg(2+) as cofactor.

It is found in the cytoplasm. It localises to the cytoskeleton. Its function is as follows. Tubulin is the major constituent of microtubules, a cylinder consisting of laterally associated linear protofilaments composed of alpha- and beta-tubulin heterodimers. Microtubules grow by the addition of GTP-tubulin dimers to the microtubule end, where a stabilizing cap forms. Below the cap, tubulin dimers are in GDP-bound state, owing to GTPase activity of alpha-tubulin. The polypeptide is Tubulin beta-5 chain (TUBB5) (Triticum aestivum (Wheat)).